Here is a 317-residue protein sequence, read N- to C-terminus: Ribose-phosphate pyrophosphokinase (317 aa).

Residues 43–45 (DGE) and 102–103 (RQ) each bind ATP. His136 and Asp175 together coordinate Mg(2+). Residue Lys198 is part of the active site. D-ribose 5-phosphate-binding positions include Arg200, Asp224, and 228–232 (DTAGT).

This sequence belongs to the ribose-phosphate pyrophosphokinase family. Class I subfamily. In terms of assembly, homohexamer. Mg(2+) is required as a cofactor.

It is found in the cytoplasm. The catalysed reaction is D-ribose 5-phosphate + ATP = 5-phospho-alpha-D-ribose 1-diphosphate + AMP + H(+). It functions in the pathway metabolic intermediate biosynthesis; 5-phospho-alpha-D-ribose 1-diphosphate biosynthesis; 5-phospho-alpha-D-ribose 1-diphosphate from D-ribose 5-phosphate (route I): step 1/1. Functionally, involved in the biosynthesis of the central metabolite phospho-alpha-D-ribosyl-1-pyrophosphate (PRPP) via the transfer of pyrophosphoryl group from ATP to 1-hydroxyl of ribose-5-phosphate (Rib-5-P). This chain is Ribose-phosphate pyrophosphokinase, found in Oceanobacillus iheyensis (strain DSM 14371 / CIP 107618 / JCM 11309 / KCTC 3954 / HTE831).